We begin with the raw amino-acid sequence, 142 residues long: UPF0310 protein PYRAB08750 (142 aa).

The protein belongs to the UPF0310 family.

The polypeptide is UPF0310 protein PYRAB08750 (Pyrococcus abyssi (strain GE5 / Orsay)).